The chain runs to 156 residues: Small ribosomal subunit protein uS7 (156 aa).

It belongs to the universal ribosomal protein uS7 family. As to quaternary structure, part of the 30S ribosomal subunit. Contacts proteins S9 and S11.

Its function is as follows. One of the primary rRNA binding proteins, it binds directly to 16S rRNA where it nucleates assembly of the head domain of the 30S subunit. Is located at the subunit interface close to the decoding center, probably blocks exit of the E-site tRNA. The polypeptide is Small ribosomal subunit protein uS7 (Thiomonas delicata (Thiomonas cuprina)).